The chain runs to 253 residues: MATHRLVMVRHGESTWNQENRFCGWFDAELSEKGTEEAKRGAKAIKDAKMEFDICYTSVLKRAIRTLWAILDGTDQMWLPVVRTWRLNERHYGGLTGLNKAETAAKHGEEQVKIWRRSFDIPPPPMDEKHPYYNSISKERRYAGLKPGELPTCESLKDTIARALPFWNEEIVPQIKAGKRVLIAAHGNSLRGIVKHLEGMSDQAIMELNLPTGIPIVYELNKELKPTKPMQFLGDEETVRKAMEAVAAQGKAK.

T3 carries the phosphothreonine modification. Substrate contacts are provided by residues 10–17 (RHGESTWN), 23–24 (CG), R62, 89–92 (ERHY), K100, and 116–117 (RR). Catalysis depends on H11, which acts as the Tele-phosphohistidine intermediate. Phosphoserine is present on S14. The Proton donor/acceptor role is filled by E89. Position 118 is a phosphoserine (S118). Phosphotyrosine occurs at positions 132 and 133. S135 carries the phosphoserine modification. T152 bears the Phosphothreonine mark. 187–188 (GN) contacts substrate.

The protein belongs to the phosphoglycerate mutase family. BPG-dependent PGAM subfamily. In terms of assembly, homodimer. Interacts with ENO1. As to expression, expressed in the heart and muscle. Not found in the liver and brain.

The enzyme catalyses (2R)-2-phosphoglycerate = (2R)-3-phosphoglycerate. It carries out the reaction (2R)-3-phospho-glyceroyl phosphate = (2R)-2,3-bisphosphoglycerate + H(+). Interconversion of 3- and 2-phosphoglycerate with 2,3-bisphosphoglycerate as the primer of the reaction. Can also catalyze the reaction of EC 5.4.2.4 (synthase), but with a reduced activity. This chain is Phosphoglycerate mutase 2 (PGAM2), found in Homo sapiens (Human).